The chain runs to 308 residues: Methionyl-tRNA formyltransferase (308 aa).

110–113 (SLLP) lines the (6S)-5,6,7,8-tetrahydrofolate pocket.

Belongs to the Fmt family.

The catalysed reaction is L-methionyl-tRNA(fMet) + (6R)-10-formyltetrahydrofolate = N-formyl-L-methionyl-tRNA(fMet) + (6S)-5,6,7,8-tetrahydrofolate + H(+). In terms of biological role, attaches a formyl group to the free amino group of methionyl-tRNA(fMet). The formyl group appears to play a dual role in the initiator identity of N-formylmethionyl-tRNA by promoting its recognition by IF2 and preventing the misappropriation of this tRNA by the elongation apparatus. This Neisseria meningitidis serogroup C (strain 053442) protein is Methionyl-tRNA formyltransferase.